We begin with the raw amino-acid sequence, 184 residues long: UPF0301 protein RSKD131_2391 (184 aa).

This sequence belongs to the UPF0301 (AlgH) family.

The protein is UPF0301 protein RSKD131_2391 of Cereibacter sphaeroides (strain KD131 / KCTC 12085) (Rhodobacter sphaeroides).